The chain runs to 1034 residues: Phosphoenolpyruvate carboxylase (1034 aa).

Residues His203 and Lys680 contribute to the active site.

Belongs to the PEPCase type 1 family. Requires Mg(2+) as cofactor.

It carries out the reaction oxaloacetate + phosphate = phosphoenolpyruvate + hydrogencarbonate. Functionally, forms oxaloacetate, a four-carbon dicarboxylic acid source for the tricarboxylic acid cycle. The chain is Phosphoenolpyruvate carboxylase (ppc) from Synechocystis sp. (strain ATCC 27184 / PCC 6803 / Kazusa).